The primary structure comprises 762 residues: 1-phosphatidylinositol 4,5-bisphosphate phosphodiesterase delta-4 (762 aa).

The region spanning 16 to 124 is the PH domain; sequence LLMQEGMPMR…WMRGLQLLVD (109 aa). Residues 26–53 form a substrate binding region; sequence KVRSKSWKKLRYFRLQNDGMTVWHARQA. EF-hand domains follow at residues 134 to 169, 170 to 205, and 206 to 237; these read RLDQWLSDWFQRGDKNQDGKMSFQEVQRLLHLMNVE, MDQEYAFSLFQAADTSQSGTLEGEEFVQFYKALTKR, and AEVQELFESFSADGQKLTLLEFLDFLQEEQKE. Residues Asp-147, Asn-149, Asp-151, Lys-153, Glu-158, Asp-183, Ser-185, Ser-187, Thr-189, and Glu-194 each coordinate Ca(2+). The short motif at 213-243 is the GBA element; it reads ESFSADGQKLTLLEFLDFLQEEQKERDCTSE. A PI-PLC X-box domain is found at 290–435; the sequence is QDMTQPLNHY…LRRKILVKGK (146 aa). The active site involves His-305. Ca(2+)-binding residues include Asn-306, Glu-335, and Asp-337. The active site involves His-350. Ca(2+) is bound at residue Glu-384. Residues Lys-433 and Lys-435 each coordinate substrate. Over residues 443–471 the composition is skewed to acidic residues; sequence LEYEEEEAEPELEESELALESQFETEPEP. Residues 443–483 are disordered; it reads LEYEEEEAEPELEESELALESQFETEPEPQEQNLQNKDKKK. Residue Ser-457 is modified to Phosphoserine. The 117-residue stretch at 493–609 folds into the PI-PLC Y-box domain; that stretch reads LSSLVIYLKS…GYVLKPDFLR (117 aa). Substrate contacts are provided by Ser-522 and Arg-549. Residues 609–736 enclose the C2 domain; sequence RDIQSSFHPE…QGYRHIHLLS (128 aa). Residues Ile-650, Asp-652, Asn-676, Asp-705, Tyr-706, and Asp-707 each contribute to the Ca(2+) site. The PDZ-binding motif lies at 731-734; sequence HIHL.

Interacts with GRIP1. In terms of assembly, interacts (via GBA motif) with guanine nucleotide-binding protein G(i) alpha subunit GNAI3 (inactive GDP-bound form); high-affinity interaction. As to quaternary structure, interacts (via GBA motif) with guanine nucleotide-binding protein G(i) alpha subunit GNAI3 (inactive GDP-bound form); low-affinity interaction. Ca(2+) serves as cofactor. Highly expressed in skeletal muscle and kidney tissues, and at moderate level in intestinal tissue. Expressed in corneal epithelial cells.

Its subcellular location is the membrane. It is found in the nucleus. The protein resides in the cytoplasm. The protein localises to the endoplasmic reticulum. It catalyses the reaction a 1,2-diacyl-sn-glycero-3-phospho-(1D-myo-inositol-4,5-bisphosphate) + H2O = 1D-myo-inositol 1,4,5-trisphosphate + a 1,2-diacyl-sn-glycerol + H(+). It carries out the reaction a 1,2-diacyl-sn-glycero-3-phospho-(1D-myo-inositol) + H2O = 1D-myo-inositol 1-phosphate + a 1,2-diacyl-sn-glycerol + H(+). In terms of biological role, hydrolyzes the phosphatidylinositol 4,5-bisphosphate (PIP2) to generate 2 second messenger molecules diacylglycerol (DAG) and inositol 1,4,5-trisphosphate (IP3). DAG mediates the activation of protein kinase C (PKC), while IP3 releases Ca(2+) from intracellular stores. Required for acrosome reaction in sperm during fertilization, probably by acting as an important enzyme for intracellular Ca(2+) mobilization in the zona pellucida-induced acrosome reaction. May play a role in cell growth. Modulates the liver regeneration in cooperation with nuclear PKC. Overexpression up-regulates the Erk signaling pathway and proliferation. Its function is as follows. Acts as a non-receptor guanine nucleotide exchange factor which binds to and activates guanine nucleotide-binding protein (G-protein) alpha subunit GNAI3. This is 1-phosphatidylinositol 4,5-bisphosphate phosphodiesterase delta-4 from Homo sapiens (Human).